The sequence spans 468 residues: ATP synthase subunit beta (468 aa).

An ATP-binding site is contributed by 155-162; the sequence is GGAGVGKT.

This sequence belongs to the ATPase alpha/beta chains family. F-type ATPases have 2 components, CF(1) - the catalytic core - and CF(0) - the membrane proton channel. CF(1) has five subunits: alpha(3), beta(3), gamma(1), delta(1), epsilon(1). CF(0) has three main subunits: a(1), b(2) and c(9-12). The alpha and beta chains form an alternating ring which encloses part of the gamma chain. CF(1) is attached to CF(0) by a central stalk formed by the gamma and epsilon chains, while a peripheral stalk is formed by the delta and b chains.

The protein resides in the cell membrane. It carries out the reaction ATP + H2O + 4 H(+)(in) = ADP + phosphate + 5 H(+)(out). In terms of biological role, produces ATP from ADP in the presence of a proton gradient across the membrane. The catalytic sites are hosted primarily by the beta subunits. The sequence is that of ATP synthase subunit beta from Streptococcus pyogenes serotype M5 (strain Manfredo).